The following is a 66-amino-acid chain: U1-theraphotoxin-Cg1a 1 (66 aa).

The N-terminal stretch at Met-1–Ala-21 is a signal peptide. A propeptide spanning residues Ala-22–Arg-29 is cleaved from the precursor. 3 disulfides stabilise this stretch: Cys-31/Cys-46, Cys-38/Cys-51, and Cys-45/Cys-58. Residue Pro-63 is modified to Proline amide.

This sequence belongs to the neurotoxin 10 (Hwtx-1) family. 46 (Jztx-7/10/12) subfamily. As to expression, expressed by the venom gland.

It is found in the secreted. In terms of biological role, probable ion channel inhibitor. The sequence is that of U1-theraphotoxin-Cg1a 1 from Chilobrachys guangxiensis (Chinese earth tiger tarantula).